The sequence spans 217 residues: Protein LURP-one-related 15 (217 aa).

An N-acetylmethionine modification is found at M1.

The protein belongs to the LOR family.

Its function is as follows. Might be related to the phospholipid scramblase and tubby-like superfamily of membrane tethered transcription factors. The polypeptide is Protein LURP-one-related 15 (Arabidopsis thaliana (Mouse-ear cress)).